Reading from the N-terminus, the 132-residue chain is MGRDTIADIITSIRNADMGTKGMVRIASTNITENIVKILLREGFIENVRKHRESNKYFLVSTLRHRRNRKGTYRNILKRISRPGLRIYSNYQGIPRILGGMGVVILSTSRGIMTDREARLEGIGGEILCYIW.

Belongs to the universal ribosomal protein uS8 family. Part of the 30S ribosomal subunit.

It localises to the plastid. Its subcellular location is the chloroplast. In terms of biological role, one of the primary rRNA binding proteins, it binds directly to 16S rRNA central domain where it helps coordinate assembly of the platform of the 30S subunit. This is Small ribosomal subunit protein uS8c (rps8) from Illicium oligandrum (Star anise).